We begin with the raw amino-acid sequence, 516 residues long: Cytochrome P450 1A2 (516 aa).

A glycan (O-linked (GlcNAc) serine) is linked at serine 69. Substrate is bound by residues phenylalanine 226 and 361-365 (DRPQL). Residue cysteine 458 participates in heme binding.

The protein belongs to the cytochrome P450 family. In terms of assembly, interacts with PGRMC1; the interaction requires PGRMC1 homodimerization. The cofactor is heme.

The protein resides in the endoplasmic reticulum membrane. The protein localises to the microsome membrane. It catalyses the reaction an organic molecule + reduced [NADPH--hemoprotein reductase] + O2 = an alcohol + oxidized [NADPH--hemoprotein reductase] + H2O + H(+). The enzyme catalyses 17beta-estradiol + reduced [NADPH--hemoprotein reductase] + O2 = 2-hydroxy-17beta-estradiol + oxidized [NADPH--hemoprotein reductase] + H2O + H(+). The catalysed reaction is 17beta-estradiol + reduced [NADPH--hemoprotein reductase] + O2 = 4-hydroxy-17beta-estradiol + oxidized [NADPH--hemoprotein reductase] + H2O + H(+). It carries out the reaction estrone + reduced [NADPH--hemoprotein reductase] + O2 = 2-hydroxyestrone + oxidized [NADPH--hemoprotein reductase] + H2O + H(+). It catalyses the reaction estrone + reduced [NADPH--hemoprotein reductase] + O2 = 4-hydroxyestrone + oxidized [NADPH--hemoprotein reductase] + H2O + H(+). The enzyme catalyses cholesterol + reduced [NADPH--hemoprotein reductase] + O2 = 25-hydroxycholesterol + oxidized [NADPH--hemoprotein reductase] + H2O + H(+). The catalysed reaction is all-trans-retinol + reduced [NADPH--hemoprotein reductase] + O2 = all-trans-retinal + oxidized [NADPH--hemoprotein reductase] + 2 H2O + H(+). It carries out the reaction all-trans-retinal + reduced [NADPH--hemoprotein reductase] + O2 = all-trans-retinoate + oxidized [NADPH--hemoprotein reductase] + H2O + 2 H(+). It catalyses the reaction (5Z,8Z,11Z,14Z)-eicosatetraenoate + reduced [NADPH--hemoprotein reductase] + O2 = (14R,15S)-epoxy-(5Z,8Z,11Z)-eicosatrienoate + oxidized [NADPH--hemoprotein reductase] + H2O + H(+). The enzyme catalyses (5Z,8Z,11Z,14Z)-eicosatetraenoate + reduced [NADPH--hemoprotein reductase] + O2 = (14S,15R)-epoxy-(5Z,8Z,11Z)-eicosatrienoate + oxidized [NADPH--hemoprotein reductase] + H2O + H(+). The catalysed reaction is (5Z,8Z,11Z,14Z,17Z)-eicosapentaenoate + reduced [NADPH--hemoprotein reductase] + O2 = (17R,18S)-epoxy-(5Z,8Z,11Z,14Z)-eicosatetraenoate + oxidized [NADPH--hemoprotein reductase] + H2O + H(+). It carries out the reaction (4Z,7Z,10Z,13Z,16Z,19Z)-docosahexaenoate + reduced [NADPH--hemoprotein reductase] + O2 = (19R,20S)-epoxy-(4Z,7Z,10Z,13Z,16Z)-docosapentaenoate + oxidized [NADPH--hemoprotein reductase] + H2O + H(+). It catalyses the reaction (5S)-hydroperoxy-(6E,8Z,11Z,14Z)-eicosatetraenoate = 5-oxo-(6E,8Z,11Z,14Z)-eicosatetraenoate + H2O. The enzyme catalyses (12S)-hydroperoxy-(5Z,8Z,10E,14Z)-eicosatetraenoate = 12-oxo-(5Z,8Z,10E,14Z)-eicosatetraenoate + H2O. The catalysed reaction is (15S)-hydroperoxy-(5Z,8Z,11Z,13E)-eicosatetraenoate = 15-oxo-(5Z,8Z,11Z,13E)-eicosatetraenoate + H2O. It carries out the reaction (13S)-hydroperoxy-(9Z,11E)-octadecadienoate = 13-oxo-(9Z,11E)-octadecadienoate + H2O. It catalyses the reaction (5Z,8Z,11Z,14Z)-eicosatetraenoate + reduced [NADPH--hemoprotein reductase] + O2 = 13-hydroxy-(5Z,8Z,11Z,14Z)-eicosatetraenoate + oxidized [NADPH--hemoprotein reductase] + H2O + H(+). The enzyme catalyses (5Z,8Z,11Z,14Z)-eicosatetraenoate + reduced [NADPH--hemoprotein reductase] + O2 = 19-hydroxy-(5Z,8Z,11Z,14Z)-eicosatetraenoate + oxidized [NADPH--hemoprotein reductase] + H2O + H(+). The catalysed reaction is (9Z,12Z)-octadecadienoate + reduced [NADPH--hemoprotein reductase] + O2 = 11-hydroxy-(9Z,12Z)-octadecadienoate + oxidized [NADPH--hemoprotein reductase] + H2O + H(+). It functions in the pathway cofactor metabolism; retinol metabolism. The protein operates within steroid metabolism; cholesterol metabolism. It participates in lipid metabolism; arachidonate metabolism. Its function is as follows. A cytochrome P450 monooxygenase involved in the metabolism of various endogenous substrates, including fatty acids, steroid hormones and vitamins. Mechanistically, uses molecular oxygen inserting one oxygen atom into a substrate, and reducing the second into a water molecule, with two electrons provided by NADPH via cytochrome P450 reductase (NADPH--hemoprotein reductase). Catalyzes the hydroxylation of carbon-hydrogen bonds. Exhibits high catalytic activity for the formation of hydroxyestrogens from estrone (E1) and 17beta-estradiol (E2), namely 2-hydroxy E1 and E2. Metabolizes cholesterol toward 25-hydroxycholesterol, a physiological regulator of cellular cholesterol homeostasis. May act as a major enzyme for all-trans retinoic acid biosynthesis in the liver. Catalyzes two successive oxidative transformation of all-trans retinol to all-trans retinal and then to the active form all-trans retinoic acid. Primarily catalyzes stereoselective epoxidation of the last double bond of polyunsaturated fatty acids (PUFA), displaying a strong preference for the (R,S) stereoisomer. Catalyzes bisallylic hydroxylation and omega-1 hydroxylation of PUFA. May also participate in eicosanoids metabolism by converting hydroperoxide species into oxo metabolites (lipoxygenase-like reaction, NADPH-independent). Plays a role in the oxidative metabolism of xenobiotics. Catalyzes the N-hydroxylation of heterocyclic amines and the O-deethylation of phenacetin. Metabolizes caffeine via N3-demethylation. The polypeptide is Cytochrome P450 1A2 (CYP1A2) (Oryctolagus cuniculus (Rabbit)).